Here is a 160-residue protein sequence, read N- to C-terminus: SsrA-binding protein (160 aa).

The tract at residues 133–160 (GKKLHDKRDTEKERDWKREQQRLLRDRG) is disordered. A compositionally biased stretch (basic and acidic residues) spans 138–160 (DKRDTEKERDWKREQQRLLRDRG).

The protein belongs to the SmpB family.

It is found in the cytoplasm. Functionally, required for rescue of stalled ribosomes mediated by trans-translation. Binds to transfer-messenger RNA (tmRNA), required for stable association of tmRNA with ribosomes. tmRNA and SmpB together mimic tRNA shape, replacing the anticodon stem-loop with SmpB. tmRNA is encoded by the ssrA gene; the 2 termini fold to resemble tRNA(Ala) and it encodes a 'tag peptide', a short internal open reading frame. During trans-translation Ala-aminoacylated tmRNA acts like a tRNA, entering the A-site of stalled ribosomes, displacing the stalled mRNA. The ribosome then switches to translate the ORF on the tmRNA; the nascent peptide is terminated with the 'tag peptide' encoded by the tmRNA and targeted for degradation. The ribosome is freed to recommence translation, which seems to be the essential function of trans-translation. This is SsrA-binding protein from Rhizorhabdus wittichii (strain DSM 6014 / CCUG 31198 / JCM 15750 / NBRC 105917 / EY 4224 / RW1) (Sphingomonas wittichii).